The primary structure comprises 272 residues: ATP synthase subunit a (272 aa).

The next 7 membrane-spanning stretches (helical) occupy residues 39–59, 103–123, 124–144, 152–172, 181–201, 221–241, and 242–262; these read GFWA…LIFI, VAPL…LKWI, PVDY…KIVP, FGIS…VKGV, FTPF…IIGL, VVFI…NVPW, and AIFH…LTVV.

It belongs to the ATPase A chain family. F-type ATPases have 2 components, CF(1) - the catalytic core - and CF(0) - the membrane proton channel. CF(1) has five subunits: alpha(3), beta(3), gamma(1), delta(1), epsilon(1). CF(0) has three main subunits: a(1), b(2) and c(9-12). The alpha and beta chains form an alternating ring which encloses part of the gamma chain. CF(1) is attached to CF(0) by a central stalk formed by the gamma and epsilon chains, while a peripheral stalk is formed by the delta and b chains.

Its subcellular location is the cell inner membrane. Its function is as follows. Key component of the proton channel; it plays a direct role in the translocation of protons across the membrane. In Ectopseudomonas mendocina (strain ymp) (Pseudomonas mendocina), this protein is ATP synthase subunit a.